Consider the following 433-residue polypeptide: Histidinol dehydrogenase (433 aa).

Serine 236, glutamine 258, and histidine 261 together coordinate substrate. 2 residues coordinate Zn(2+): glutamine 258 and histidine 261. Catalysis depends on proton acceptor residues glutamate 325 and histidine 326. Substrate contacts are provided by histidine 326, aspartate 359, glutamate 413, and histidine 418. Aspartate 359 is a Zn(2+) binding site. Histidine 418 is a binding site for Zn(2+).

It belongs to the histidinol dehydrogenase family. Zn(2+) is required as a cofactor.

The enzyme catalyses L-histidinol + 2 NAD(+) + H2O = L-histidine + 2 NADH + 3 H(+). It functions in the pathway amino-acid biosynthesis; L-histidine biosynthesis; L-histidine from 5-phospho-alpha-D-ribose 1-diphosphate: step 9/9. Functionally, catalyzes the sequential NAD-dependent oxidations of L-histidinol to L-histidinaldehyde and then to L-histidine. The sequence is that of Histidinol dehydrogenase from Pseudoalteromonas translucida (strain TAC 125).